The chain runs to 711 residues: Putative DNA topoisomerase 3 (711 aa).

The 134-residue stretch at 2-135 (KYLILAEKPS…LRRLWISSVT (134 aa)) folds into the Toprim domain. Mg(2+)-binding residues include Glu8 and Asp104. The Topo IA-type catalytic domain occupies 152–580 (YNDLYYAALA…EMKGFTKDVV (429 aa)). Residues 186-191 (SLGRVQ) are interaction with DNA. Tyr305 serves as the catalytic O-(5'-phospho-DNA)-tyrosine intermediate. Residues 691–711 (MNKNEGLDNNPFKDALKNLNL) form a disordered region.

This sequence belongs to the type IA topoisomerase family. Requires Mg(2+) as cofactor.

It carries out the reaction ATP-independent breakage of single-stranded DNA, followed by passage and rejoining.. Functionally, releases the supercoiling and torsional tension of DNA, which is introduced during the DNA replication and transcription, by transiently cleaving and rejoining one strand of the DNA duplex. Introduces a single-strand break via transesterification at a target site in duplex DNA. The scissile phosphodiester is attacked by the catalytic tyrosine of the enzyme, resulting in the formation of a DNA-(5'-phosphotyrosyl)-enzyme intermediate and the expulsion of a 3'-OH DNA strand. The free DNA strand then undergoes passage around the unbroken strand, thus removing DNA supercoils. Finally, in the religation step, the DNA 3'-OH attacks the covalent intermediate to expel the active-site tyrosine and restore the DNA phosphodiester backbone. This Staphylococcus aureus (strain bovine RF122 / ET3-1) protein is Putative DNA topoisomerase 3.